An 80-amino-acid chain; its full sequence is Small ribosomal subunit protein bS16 (80 aa).

The protein belongs to the bacterial ribosomal protein bS16 family.

The protein is Small ribosomal subunit protein bS16 of Laribacter hongkongensis (strain HLHK9).